The primary structure comprises 116 residues: Large ribosomal subunit protein bL19 (116 aa).

The protein belongs to the bacterial ribosomal protein bL19 family.

Functionally, this protein is located at the 30S-50S ribosomal subunit interface and may play a role in the structure and function of the aminoacyl-tRNA binding site. This is Large ribosomal subunit protein bL19 from Mannheimia succiniciproducens (strain KCTC 0769BP / MBEL55E).